The following is a 167-amino-acid chain: Methylated-DNA--protein-cysteine methyltransferase (167 aa).

Cys-128 acts as the Nucleophile; methyl group acceptor in catalysis.

The protein belongs to the MGMT family.

Its subcellular location is the cytoplasm. It carries out the reaction a 6-O-methyl-2'-deoxyguanosine in DNA + L-cysteinyl-[protein] = S-methyl-L-cysteinyl-[protein] + a 2'-deoxyguanosine in DNA. It catalyses the reaction a 4-O-methyl-thymidine in DNA + L-cysteinyl-[protein] = a thymidine in DNA + S-methyl-L-cysteinyl-[protein]. Functionally, involved in the cellular defense against the biological effects of O6-methylguanine (O6-MeG) and O4-methylthymine (O4-MeT) in DNA. Repairs the methylated nucleobase in DNA by stoichiometrically transferring the methyl group to a cysteine residue in the enzyme. This is a suicide reaction: the enzyme is irreversibly inactivated. In Methanocaldococcus jannaschii (strain ATCC 43067 / DSM 2661 / JAL-1 / JCM 10045 / NBRC 100440) (Methanococcus jannaschii), this protein is Methylated-DNA--protein-cysteine methyltransferase.